The chain runs to 298 residues: Ribosomal RNA small subunit methyltransferase H (298 aa).

S-adenosyl-L-methionine is bound by residues 46–48 (GGH), Asp-65, Phe-92, Asp-108, and His-115.

Belongs to the methyltransferase superfamily. RsmH family.

It is found in the cytoplasm. The catalysed reaction is cytidine(1402) in 16S rRNA + S-adenosyl-L-methionine = N(4)-methylcytidine(1402) in 16S rRNA + S-adenosyl-L-homocysteine + H(+). Its function is as follows. Specifically methylates the N4 position of cytidine in position 1402 (C1402) of 16S rRNA. The polypeptide is Ribosomal RNA small subunit methyltransferase H (Nostoc punctiforme (strain ATCC 29133 / PCC 73102)).